A 124-amino-acid polypeptide reads, in one-letter code: Large ribosomal subunit protein bL12 (124 aa).

Belongs to the bacterial ribosomal protein bL12 family. As to quaternary structure, homodimer. Part of the ribosomal stalk of the 50S ribosomal subunit. Forms a multimeric L10(L12)X complex, where L10 forms an elongated spine to which 2 to 4 L12 dimers bind in a sequential fashion. Binds GTP-bound translation factors.

Forms part of the ribosomal stalk which helps the ribosome interact with GTP-bound translation factors. Is thus essential for accurate translation. The protein is Large ribosomal subunit protein bL12 of Cupriavidus taiwanensis (strain DSM 17343 / BCRC 17206 / CCUG 44338 / CIP 107171 / LMG 19424 / R1) (Ralstonia taiwanensis (strain LMG 19424)).